The following is a 99-amino-acid chain: Acylphosphatase (99 aa).

The Acylphosphatase-like domain maps to 11 to 97; it reads ARRIHVKGKV…VVAQGFTQKP (87 aa). Residues R26 and N44 contribute to the active site.

Belongs to the acylphosphatase family.

The enzyme catalyses an acyl phosphate + H2O = a carboxylate + phosphate + H(+). In Rhizorhabdus wittichii (strain DSM 6014 / CCUG 31198 / JCM 15750 / NBRC 105917 / EY 4224 / RW1) (Sphingomonas wittichii), this protein is Acylphosphatase (acyP).